We begin with the raw amino-acid sequence, 361 residues long: Putative dual-specificity RNA methyltransferase RlmN (361 aa).

Glu-91 acts as the Proton acceptor in catalysis. Positions 97 to 329 (QHYGLSVCVT…KKKGVNCVVR (233 aa)) constitute a Radical SAM core domain. Residues Cys-111, Cys-115, and Cys-118 each contribute to the [4Fe-4S] cluster site. Residues 163-164 (GE), Ser-195, 218-220 (SLH), and Thr-296 contribute to the S-adenosyl-L-methionine site.

The protein belongs to the radical SAM superfamily. RlmN family. [4Fe-4S] cluster is required as a cofactor.

The protein localises to the cytoplasm. The enzyme catalyses adenosine(2503) in 23S rRNA + 2 reduced [2Fe-2S]-[ferredoxin] + 2 S-adenosyl-L-methionine = 2-methyladenosine(2503) in 23S rRNA + 5'-deoxyadenosine + L-methionine + 2 oxidized [2Fe-2S]-[ferredoxin] + S-adenosyl-L-homocysteine. It carries out the reaction adenosine(37) in tRNA + 2 reduced [2Fe-2S]-[ferredoxin] + 2 S-adenosyl-L-methionine = 2-methyladenosine(37) in tRNA + 5'-deoxyadenosine + L-methionine + 2 oxidized [2Fe-2S]-[ferredoxin] + S-adenosyl-L-homocysteine. In terms of biological role, specifically methylates position 2 of adenine 2503 in 23S rRNA and position 2 of adenine 37 in tRNAs. The chain is Putative dual-specificity RNA methyltransferase RlmN from Streptococcus pneumoniae (strain CGSP14).